Here is a 590-residue protein sequence, read N- to C-terminus: Selenoprotein N (590 aa).

The interval 1–26 (MGRARPGQRGPPSPGPAAQPPAPPRR) is disordered. The N-terminal stretch at 1-43 (MGRARPGQRGPPSPGPAAQPPAPPRRRARSLALLGALLAAAAA) is a signal peptide. Residues 9 to 23 (RGPPSPGPAAQPPAP) are compositionally biased toward pro residues. One can recognise an EF-hand domain in the interval 67-102 (TLGTDGLFLFSSLDTDGDMYISPEEFKPIAEKLTGS). The N-linked (GlcNAc...) asparagine glycan is linked to asparagine 126. Selenocysteine 127 is a non-standard amino acid (selenocysteine). Asparagine 190 is a glycosylation site (N-linked (GlcNAc...) asparagine). Selenocysteine 462 is a non-standard amino acid (selenocysteine). 3 N-linked (GlcNAc...) asparagine glycosylation sites follow: asparagine 483, asparagine 505, and asparagine 531.

As to quaternary structure, interacts with RYR1, RYR2 and RYR3. Post-translationally, N-glycosylated. In terms of tissue distribution, isoform 1 and isoform 2 are expressed in skeletal muscle, brain, lung and placenta. Isoform 2 is also expressed in heart, diaphragm and stomach.

It localises to the endoplasmic reticulum membrane. In terms of biological role, plays an important role in cell protection against oxidative stress and in the regulation of redox-related calcium homeostasis. Regulates the calcium level of the ER by protecting the calcium pump ATP2A2 against the oxidoreductase ERO1A-mediated oxidative damage. Within the ER, ERO1A activity increases the concentration of H(2)O(2), which attacks the luminal thiols in ATP2A2 and thus leads to cysteinyl sulfenic acid formation (-SOH) and SEPN1 reduces the SOH back to free thiol (-SH), thus restoring ATP2A2 activity. Acts as a modulator of ryanodine receptor (RyR) activity: protects RyR from oxidation due to increased oxidative stress, or directly controls the RyR redox state, regulating the RyR-mediated calcium mobilization required for normal muscle development and differentiation. Functionally, essential for muscle regeneration and satellite cell maintenance in skeletal muscle. This is Selenoprotein N from Homo sapiens (Human).